The chain runs to 133 residues: Secretin (133 aa).

Positions 1-22 are cleaved as a signal peptide; it reads MEPPLPTPMLLLLLLLLSSSAA. A propeptide spanning residues 23-30 is cleaved from the precursor; it reads LPAPPRTP. Position 58 is a valine amide (Val-58). Ser-62 carries the post-translational modification Phosphoserine. A propeptide spanning residues 62 to 133 is cleaved from the precursor; sequence SEQDTENIPE…EWTETTRPPR (72 aa).

Belongs to the glucagon family. In terms of tissue distribution, highly expressed in the intestine. Also expressed in the hippocampus, cerebellum and the brain stem in adult mouse brain. In the hippocampus, expressed in the dentate gyrus, the hilus and the molecular layer.

The protein localises to the secreted. Its function is as follows. Hormone involved in different processes, such as regulation of the pH of the duodenal content, food intake and water homeostasis. Exerts its biological effects by binding to secretin receptor (SCTR), a G-protein coupled receptor expressed in the basolateral domain of several cells. Acts as a key gastrointestinal hormone by regulating the pH of the duodenal content. Secreted by S cells of the duodenum in the crypts of Lieberkuehn and regulates the pH of the duodenum by (1) inhibiting the secretion of gastric acid from the parietal cells of the stomach and (2) stimulating the production of bicarbonate (NaHCO(3)) from the ductal cells of the pancreas. Production of bicarbonate is essential to neutralize the pH and ensure no damage is done to the small intestine by the gastric acid. In addition to regulating the pH of the duodenal content, plays a central role in diet induced thermogenesis: acts as a non-sympathetic brown fat (BAT) activator mediating prandial thermogenesis, which consequentially induces satiation. Mechanistically, secretin released by the gut after a meal binds to secretin receptor (SCTR) in brown adipocytes, activating brown fat thermogenesis by stimulating lipolysis, which is sensed in the brain and promotes satiation. Also able to stimulate lipolysis in white adipocytes. Also plays an important role in cellular osmoregulation: released into the systemic circulation in response to hyperosmolality and acts at different levels in the hypothalamus, pituitary and kidney to regulate water homeostasis. Also plays a role in the central nervous system, possibly by acting as a neuropeptide hormone: required for hippocampal synaptic function and neural progenitor cells maintenance. This chain is Secretin, found in Mus musculus (Mouse).